Here is a 440-residue protein sequence, read N- to C-terminus: Glutamate-1-semialdehyde 2,1-aminomutase (440 aa).

K273 is modified (N6-(pyridoxal phosphate)lysine).

Belongs to the class-III pyridoxal-phosphate-dependent aminotransferase family. HemL subfamily. Homodimer. Pyridoxal 5'-phosphate is required as a cofactor.

It localises to the cytoplasm. The enzyme catalyses (S)-4-amino-5-oxopentanoate = 5-aminolevulinate. It participates in porphyrin-containing compound metabolism; protoporphyrin-IX biosynthesis; 5-aminolevulinate from L-glutamyl-tRNA(Glu): step 2/2. The chain is Glutamate-1-semialdehyde 2,1-aminomutase from Alkaliphilus metalliredigens (strain QYMF).